A 935-amino-acid chain; its full sequence is MSDYKDTLNLPKTSFSMKGNLANKEPMILNKWEKQGIYKKIREHFAGREKFILHDGPPYANGSIHVGHAVNKILKDIIIKSKTLSGYDAPFTPTWDCHGLPIELQVEKKHGKAGQSISEDDFRKECRKYAKKQVEIQKKDFKRLGVLGDWEQPYLTINFDYEANMIRTLAKIIENGHLSKGFKPVHWCTDCGSALAEAEVEYADKVSPAIDVKFKIKDKDKLAQAFGLDSLNHDAFAIIWTTTPWTLPANQAIAVNNQLNYSLIKIEDFYIILAENLVEQTLKRYAIENAQIIATTTGNKLTGIIAEHPFYSRHVPILHGDHVTDDSGTGLVHTAPTHGVDDFTLGKEHNLSMEIFVKGNGCYSENTKLFAGEFIFKANDRIIELLGEKKRLMNSDKIKHSYPHCWRHKTPLMFRATPQWFISMEKQGLRDKALQAIKETSWAPSWGQARIEGMVKDRPDWCISRQRTWGVPLSLFIHKETEELHPNTIEILYKVAEKIEKDGIEAWFNADDCEFITETAQYKSVKDTLDVWFDSGSSSMCILDLDKRLSYPADLYLEGSDQHRGWFQTSLLVAMSAKGSQPYKEVFTHGFVVDEHGRKMSKSLGNVTSPQDIYNTLGADILRLWTASTDYKSEMAVSDQILKRTADTYRRLRNTARFLLSNLDGFNPVTDIIEFDKLVKLDQWAIAKTKEFQDKIIEAYDKYQTHTVAQLIHHFCSIEMGSFYLDIIKDRQYTAKTDGHPRKSAQTAIYHIVHALVRWMAPILSFTADEIWDATLKTTDLPIQLCEWYTGLKSFDQDAELDLEYWAKIQEIRSEVNRVLEIKRNEDVIKASLEAEITIYADKYNYKLLEKLGNELRFLLISSKADLKVIEESTSSSIAANIPGLLIEITKIEEPKCERCWHRSSTVGDNPQYKDICSRCVENITTEAGESREFA.

The 'HIGH' region signature appears at 58–68 (PYANGSIHVGH). Glutamate 558 is a binding site for L-isoleucyl-5'-AMP. The 'KMSKS' region motif lies at 599–603 (KMSKS). Position 602 (lysine 602) interacts with ATP. The Zn(2+) site is built by cysteine 897, cysteine 900, cysteine 917, and cysteine 920.

It belongs to the class-I aminoacyl-tRNA synthetase family. IleS type 1 subfamily. In terms of assembly, monomer. Zn(2+) serves as cofactor.

Its subcellular location is the cytoplasm. The catalysed reaction is tRNA(Ile) + L-isoleucine + ATP = L-isoleucyl-tRNA(Ile) + AMP + diphosphate. Catalyzes the attachment of isoleucine to tRNA(Ile). As IleRS can inadvertently accommodate and process structurally similar amino acids such as valine, to avoid such errors it has two additional distinct tRNA(Ile)-dependent editing activities. One activity is designated as 'pretransfer' editing and involves the hydrolysis of activated Val-AMP. The other activity is designated 'posttransfer' editing and involves deacylation of mischarged Val-tRNA(Ile). This Francisella tularensis subsp. mediasiatica (strain FSC147) protein is Isoleucine--tRNA ligase.